The chain runs to 142 residues: Large ribosomal subunit protein uL13 (142 aa).

This sequence belongs to the universal ribosomal protein uL13 family. Part of the 50S ribosomal subunit.

In terms of biological role, this protein is one of the early assembly proteins of the 50S ribosomal subunit, although it is not seen to bind rRNA by itself. It is important during the early stages of 50S assembly. This chain is Large ribosomal subunit protein uL13, found in Treponema pallidum (strain Nichols).